Consider the following 363-residue polypeptide: Peroxin-36 (363 aa).

Residues 1 to 193 (MSNLEKQIRL…ESFFINSFEQ (193 aa)) lie on the Cytoplasmic side of the membrane. Disordered stretches follow at residues 71–114 (QNHQ…DTST) and 128–157 (TNSN…SKSG). Residues 97 to 114 (VDSNSDSSSSETLIDTST) show a composition bias toward low complexity. The helical transmembrane segment at 194–213 (LIALFDNFYFLSSLIGFNTS) threads the bilayer. Residues 214 to 232 (NSNSKITRLLRNFIKQASK) lie on the Peroxisomal side of the membrane. A helical transmembrane segment spans residues 233 to 250 (IWLVIIFLTVKNLFIRMI). The Cytoplasmic segment spans residues 251–363 (KLNRTEKKVK…SSDDIIDEYA (113 aa)).

The protein localises to the peroxisome membrane. Its function is as follows. Controls peroxisome morphology and abundance under conditions of peroxisome proliferation such as oleate and methanol media. Has additional function(s), which is not present in its functional homologs such as Saccharomyces cerevisea PEX34 or human PEX16. The protein is Peroxin-36 of Komagataella phaffii (strain GS115 / ATCC 20864) (Yeast).